Reading from the N-terminus, the 256-residue chain is Dihydromonacolin L-[lovastatin nonaketide synthase] thioesterase (256 aa).

Residues Ser122, Asp201, and His229 each act as charge relay system in the active site.

This sequence belongs to the LovG family.

The enzyme catalyses dihydromonacolin L-[lovastatin nonaketide synthase] + H2O = holo-[lovastatin nonaketide synthase] + dihydromonacolin L carboxylate + H(+). It participates in polyketide biosynthesis; lovastatin biosynthesis. Its function is as follows. Esterase; part of the gene cluster that mediates the biosynthesis of lovastatin (also known as mevinolin, mevacor or monacolin K), a hypolipidemic inhibitor of (3S)-hydroxymethylglutaryl-coenzyme A (HMG-CoA) reductase (HMGR). The first step in the biosynthesis of lovastatin is the production of dihydromonacolin L acid by the lovastatin nonaketide synthase lovB and the trans-acting enoyl reductase lovC via condensation of one acetyl-CoA unit and 8 malonyl-CoA units. Dihydromonacolin L acid is released from lovB by the thioesterase lovG. Next, dihydromonacolin L acid is oxidized by the dihydromonacolin L monooxygenase lovA twice to form monacolin J acid. The 2-methylbutyrate moiety of lovastatin is synthesized by the lovastatin diketide synthase lovF via condensation of one acetyl-CoA unit and one malonyl-CoA unit. Finally, the covalent attachment of this moiety to monacolin J acid is catalyzed by the transesterase lovD to yield lovastatin. LovD has broad substrate specificity and can also convert monacolin J to simvastatin using alpha-dimethylbutanoyl-S-methyl-3-mercaptopropionate (DMB-S-MMP) as the thioester acyl donor, and can also catalyze the reverse reaction and function as hydrolase in vitro. LovD has much higher activity with LovF-bound 2-methylbutanoate than with free diketide substrates. Esterase that catalyzes the release of covalently bound dihydromonacolin L from LovB during lovastatin biosynthesis. In Aspergillus terreus, this protein is Dihydromonacolin L-[lovastatin nonaketide synthase] thioesterase.